A 255-amino-acid polypeptide reads, in one-letter code: tRNA-cytidine(32) 2-sulfurtransferase (255 aa).

A PP-loop motif motif is present at residues 37–42 (SGGKDS). [4Fe-4S] cluster is bound by residues cysteine 112, cysteine 115, and cysteine 202.

It belongs to the TtcA family. Homodimer. Mg(2+) serves as cofactor. The cofactor is [4Fe-4S] cluster.

The protein localises to the cytoplasm. The catalysed reaction is cytidine(32) in tRNA + S-sulfanyl-L-cysteinyl-[cysteine desulfurase] + AH2 + ATP = 2-thiocytidine(32) in tRNA + L-cysteinyl-[cysteine desulfurase] + A + AMP + diphosphate + H(+). Its pathway is tRNA modification. Functionally, catalyzes the ATP-dependent 2-thiolation of cytidine in position 32 of tRNA, to form 2-thiocytidine (s(2)C32). The sulfur atoms are provided by the cysteine/cysteine desulfurase (IscS) system. The polypeptide is tRNA-cytidine(32) 2-sulfurtransferase (Citrifermentans bemidjiense (strain ATCC BAA-1014 / DSM 16622 / JCM 12645 / Bem) (Geobacter bemidjiensis)).